A 396-amino-acid chain; its full sequence is MNYCKTTFHIFFFVLFFITIYEIKCQLRFASLGDWGKDTKGQILNAKYFKQFIKNERVTFIVSPGSNFIDGVKGLNDPAWKNLYEDVYSEEKGDMYMPFFTVLGTRDWTGNYNAQLLKGQGIYIEKNGETSIEKDADATNYPKWIMPNYWYHYFTHFTVSSGPSIVKTGHKDLAAAFIFIDTWVLSSNFPYKKIHEKAWNDLKSQLSVAKKIADFIIVVGDQPIYSSGYSRGSSYLAYYLLPLLKDAEVDLYISGHDNNMEVIEDNDMAHITCGSGSMSQGKSGMKNSKSLFFSSDIGFCVHELSNNGIVTKFVSSKKGEVIYTHKLNIKKKKTLDKVNALQHFAALPNVELTDVPSSGPMGNKDTFVRVVGTIGILIGSVIVFIGASSFLSKNMK.

Topologically, residues 1 to 369 are lumenal; that stretch reads MNYCKTTFHI…PMGNKDTFVR (369 aa). A metal cation-binding residues include histidine 195 and histidine 256. A helical transmembrane segment spans residues 370-390; the sequence is VVGTIGILIGSVIVFIGASSF. Over 391-396 the chain is Cytoplasmic; the sequence is LSKNMK.

The protein belongs to the metallophosphoesterase superfamily. Purple acid phosphatase family. In terms of assembly, component of the glideosome complex composed of GAP50, GAP45, MTIP and MyoA; the complex is formed during the late schizont stage and in merozoites. MyoA, MTIP and GAP45 probably form an initial complex in the cytoplasm which is then recruited to the outer face of the inner membrane complex via the interaction with GAP50. Interacts with GAP45; the interaction is independent of GAP45 phosphorylation status and can also occur independently of the formation of the glideosome complex. Interacts with human factor H isoform CFH (via sushi 6-7 domains) and isoform FHL-1 (via sushi 6-7 domains); the interaction occurs in the vector mosquito midgut at the surface of activated gametocytes; the interaction protects the parasite from alternative complement pathway-mediated elimination. The cofactor is a metal cation. In terms of processing, the N-terminus signal is likely to be cleaved.

The protein localises to the inner membrane complex. The protein resides in the cell membrane. It localises to the endoplasmic reticulum membrane. The catalysed reaction is a phosphate monoester + H2O = an alcohol + phosphate. Activity is independent of metal ions. Its function is as follows. Component of the glideosome complex, an inner membrane complex structure involved in parasite gliding motility and host cell invasion. During the asexual blood stage, may play a role in the assembly and anchoring of the glideosome complex to the inner membrane complex. During the sexual stage in the vector mosquito midgut, protects gametocytes against host alternative complement pathway-mediated elimination by interacting with host complement inhibitor factor H. Has phosphatase activity towards nucleotides such as ATP, vitamins B1 and B6, phosphorylated sugars, glycerol phosphates and inositol triphosphates. However, the phosphatase activity is controversial. This chain is Glideosome-associated protein 50, found in Plasmodium falciparum (isolate 3D7).